The following is a 645-amino-acid chain: COP9 signalosome complex subunit 10 (645 aa).

The span at Met1 to Asp45 shows a compositional bias: acidic residues. The disordered stretch occupies residues Met1 to Glu63. Residues Asp46 to Glu63 show a composition bias toward basic and acidic residues. A PCI domain is found at Asp348–Lys543.

As to quaternary structure, component of a COP9 signalosome-like (CSN) complex, composed of at least RRI1/CSN5, CSN9, RRI2/CSN10, PCI8/CSN11, CSN12 and CSI1. In the complex, it probably interacts directly with CSN12.

It is found in the cytoplasm. It localises to the nucleus. In terms of biological role, component of the COP9 signalosome (CSN) complex that acts as an regulator of the ubiquitin (Ubl) conjugation pathway by mediating the deneddylation of the cullin subunit of SCF-type E3 ubiquitin-protein ligase complexes. The CSN complex is involved in the regulation of the mating pheromone response. This chain is COP9 signalosome complex subunit 10 (RRI2), found in Saccharomyces cerevisiae (strain ATCC 204508 / S288c) (Baker's yeast).